The primary structure comprises 281 residues: Protoheme IX farnesyltransferase (281 aa).

Helical transmembrane passes span 13 to 33 (VIWL…GPLV), 38 to 58 (LIEL…FNMY), 85 to 105 (ALTF…LWLG), 107 to 127 (WVTL…TIML), 132 to 152 (WLNI…GWIM), 161 to 181 (ILLS…LAYY), 206 to 226 (IISI…QLYM), 227 to 247 (AKLI…IVTI), and 261 to 281 (MFKA…ISRI).

It belongs to the UbiA prenyltransferase family. Protoheme IX farnesyltransferase subfamily.

Its subcellular location is the cell membrane. The catalysed reaction is heme b + (2E,6E)-farnesyl diphosphate + H2O = Fe(II)-heme o + diphosphate. It functions in the pathway porphyrin-containing compound metabolism; heme O biosynthesis; heme O from protoheme: step 1/1. Functionally, converts heme B (protoheme IX) to heme O by substitution of the vinyl group on carbon 2 of heme B porphyrin ring with a hydroxyethyl farnesyl side group. The sequence is that of Protoheme IX farnesyltransferase from Caldivirga maquilingensis (strain ATCC 700844 / DSM 13496 / JCM 10307 / IC-167).